The following is a 216-amino-acid chain: Ribonuclease HII (216 aa).

In terms of domain architecture, RNase H type-2 spans 33 to 216 (WPVAGADEAG…RMSFRPFRQV (184 aa)). The a divalent metal cation site is built by D39, E40, and D130.

It belongs to the RNase HII family. It depends on Mn(2+) as a cofactor. Mg(2+) is required as a cofactor.

Its subcellular location is the cytoplasm. It carries out the reaction Endonucleolytic cleavage to 5'-phosphomonoester.. Functionally, endonuclease that specifically degrades the RNA of RNA-DNA hybrids. The protein is Ribonuclease HII of Rhizobium meliloti (strain 1021) (Ensifer meliloti).